The following is a 153-amino-acid chain: Peptide methionine sulfoxide reductase MsrA (153 aa).

Cys10 is a catalytic residue.

This sequence belongs to the MsrA Met sulfoxide reductase family.

The catalysed reaction is L-methionyl-[protein] + [thioredoxin]-disulfide + H2O = L-methionyl-(S)-S-oxide-[protein] + [thioredoxin]-dithiol. The enzyme catalyses [thioredoxin]-disulfide + L-methionine + H2O = L-methionine (S)-S-oxide + [thioredoxin]-dithiol. Functionally, has an important function as a repair enzyme for proteins that have been inactivated by oxidation. Catalyzes the reversible oxidation-reduction of methionine sulfoxide in proteins to methionine. This is Peptide methionine sulfoxide reductase MsrA from Methanococcoides burtonii (strain DSM 6242 / NBRC 107633 / OCM 468 / ACE-M).